Consider the following 266-residue polypeptide: Enoyl-CoA hydratase EchA19 (266 aa).

Residue E120 is part of the active site. At K135 the chain carries N6-succinyllysine. The active site involves E140. Position 142 is an N6-succinyllysine (K142).

It belongs to the enoyl-CoA hydratase/isomerase family. In terms of assembly, homotrimer; substrate probably binds in elongated tunnels between the subunits. Post-translationally, succinylated in vitro at pH 8.1, succinylation reduces specific activity of the enzyme 5.5-fold; succinyl-CoA is a downstream by-product of cholesterol degradation. Can be de-succinylated in vitro by NAD-dependent protein deacylase (AC P9WGG3). Succinylation may be a negative feedback regulator of cholesterol metabolism.

The enzyme catalyses (22E)-3-oxochola-4,22-dien-24-oyl-CoA + H2O = (22R)-hydroxy-3-oxo-chol-4-ene-24-oyl-CoA. It functions in the pathway steroid metabolism; cholesterol degradation. Its function is as follows. Degradation of the cholesterol side chain involves 3 multistep beta-oxidation cycles, this may be involved in the second cycle. Hydrates 3-OCDO-CoA ((22E)-3-oxo-chol-4,22-dien-24-oyl-CoA) to make (22R)-HOCO-CoA (3-oxo-chol-4-ene-(22R)-hydroxy-24-oyl-CoA). Also acts on octenoyl-CoA. Not active on (E)-3-OCDS-CoA ((E)-3-oxocholest-4,24-dien-26-oyl-CoA) or 3-OPDC-CoA (3-oxo-4,17-pregnadiene-20-carboxyl-CoA). Hydrates the same substrate as ChsH3, but the 2 enzymes make different stereoisomers of the product. This Mycobacterium tuberculosis (strain ATCC 25618 / H37Rv) protein is Enoyl-CoA hydratase EchA19.